A 332-amino-acid chain; its full sequence is Ribosomal RNA small subunit methyltransferase C (332 aa).

Belongs to the methyltransferase superfamily. RsmC family. Monomer.

Its subcellular location is the cytoplasm. The catalysed reaction is guanosine(1207) in 16S rRNA + S-adenosyl-L-methionine = N(2)-methylguanosine(1207) in 16S rRNA + S-adenosyl-L-homocysteine + H(+). In terms of biological role, specifically methylates the guanine in position 1207 of 16S rRNA in the 30S particle. This Pseudomonas putida (strain GB-1) protein is Ribosomal RNA small subunit methyltransferase C.